Here is an 85-residue protein sequence, read N- to C-terminus: Large ribosomal subunit protein bL27 (85 aa).

Positions 1-21 (MAHKKAGGSTRNGRDSESKRL) are disordered.

It belongs to the bacterial ribosomal protein bL27 family.

The protein is Large ribosomal subunit protein bL27 of Pseudomonas putida (strain W619).